Consider the following 173-residue polypeptide: MNREEKSEIIQSVAEKLSKAQGVYLTEFSGLTVSEISDLRKQFREKDIEYKVVKNTLIKKALAHTKISDKLADGLKNTTAVAFGYDDPIAPAKIIKKYSDGNEKLKFKMASVDGTIFEAGQLDQLSNMLSKTENIGRIAGTINNVISGVPGTVNAVMRNLVSALEQIAKQKAA.

Belongs to the universal ribosomal protein uL10 family. Part of the ribosomal stalk of the 50S ribosomal subunit. The N-terminus interacts with L11 and the large rRNA to form the base of the stalk. The C-terminus forms an elongated spine to which L12 dimers bind in a sequential fashion forming a multimeric L10(L12)X complex.

Forms part of the ribosomal stalk, playing a central role in the interaction of the ribosome with GTP-bound translation factors. This is Large ribosomal subunit protein uL10 from Chloroherpeton thalassium (strain ATCC 35110 / GB-78).